The following is a 146-amino-acid chain: Large ribosomal subunit protein uL15 (146 aa).

The disordered stretch occupies residues 1-57; it reads MDLSNLKAAEGSVHSDNFRRGRGHGSGNGKTAGKGHKGQKARSGAPRPGFEGGQMPL.

This sequence belongs to the universal ribosomal protein uL15 family. As to quaternary structure, part of the 50S ribosomal subunit.

In terms of biological role, binds to the 23S rRNA. This Agathobacter rectalis (strain ATCC 33656 / DSM 3377 / JCM 17463 / KCTC 5835 / VPI 0990) (Eubacterium rectale) protein is Large ribosomal subunit protein uL15.